We begin with the raw amino-acid sequence, 336 residues long: uncharacterized protein (336 aa).

The tract at residues 196–222 is disordered; the sequence is YKEGDDSNWDDFGSESEDDSKEAHSEE. The span at 201–215 shows a compositional bias: acidic residues; sequence DSNWDDFGSESEDDS. Position 211 is a phosphoserine (Ser-211).

This is an uncharacterized protein from Schizosaccharomyces pombe (strain 972 / ATCC 24843) (Fission yeast).